We begin with the raw amino-acid sequence, 509 residues long: Putative aldehyde dehydrogenase family 7 member A1 homolog (509 aa).

244–249 provides a ligand contact to NAD(+); that stretch reads GSTEVG. Glutamate 266 serves as the catalytic Proton acceptor. Cysteine 300 functions as the Nucleophile in the catalytic mechanism.

The protein belongs to the aldehyde dehydrogenase family. In terms of assembly, homotetramer.

The enzyme catalyses an aldehyde + NAD(+) + H2O = a carboxylate + NADH + 2 H(+). This chain is Putative aldehyde dehydrogenase family 7 member A1 homolog, found in Dictyostelium discoideum (Social amoeba).